A 354-amino-acid polypeptide reads, in one-letter code: tRNA N6-adenosine threonylcarbamoyltransferase (354 aa).

Residues H111 and H115 each coordinate Fe cation. Residues 134 to 138 (LVSGG), D167, G180, and N279 each bind substrate. Position 319 (D319) interacts with Fe cation.

It belongs to the KAE1 / TsaD family. Requires Fe(2+) as cofactor.

It is found in the cytoplasm. The catalysed reaction is L-threonylcarbamoyladenylate + adenosine(37) in tRNA = N(6)-L-threonylcarbamoyladenosine(37) in tRNA + AMP + H(+). Functionally, required for the formation of a threonylcarbamoyl group on adenosine at position 37 (t(6)A37) in tRNAs that read codons beginning with adenine. Is involved in the transfer of the threonylcarbamoyl moiety of threonylcarbamoyl-AMP (TC-AMP) to the N6 group of A37, together with TsaE and TsaB. TsaD likely plays a direct catalytic role in this reaction. This chain is tRNA N6-adenosine threonylcarbamoyltransferase, found in Neisseria meningitidis serogroup A / serotype 4A (strain DSM 15465 / Z2491).